A 222-amino-acid polypeptide reads, in one-letter code: Transcriptional regulatory protein BasR (222 aa).

Residues 2-116 (KILIVEDDTL…ELHARIRALL (115 aa)) form the Response regulatory domain. The residue at position 51 (aspartate 51) is a 4-aspartylphosphate. Positions 124–218 (ESELIVGNLT…VRGFGYMLVA (95 aa)) form a DNA-binding region, ompR/PhoB-type.

Homodimer. Phosphorylated by BasS.

The protein localises to the cytoplasm. In terms of biological role, member of the two-component regulatory system BasS/BasR. BasR induces the transcription of the ugd, ais, arnBCADTEF and eptA-basRS loci, all involved in resistance to polymyxin. This is Transcriptional regulatory protein BasR (basR) from Escherichia coli (strain K12).